The sequence spans 105 residues: Iron-sulfur cluster assembly protein CyaY (105 aa).

The protein belongs to the frataxin family.

In terms of biological role, involved in iron-sulfur (Fe-S) cluster assembly. May act as a regulator of Fe-S biogenesis. The polypeptide is Iron-sulfur cluster assembly protein CyaY (Paraburkholderia phytofirmans (strain DSM 17436 / LMG 22146 / PsJN) (Burkholderia phytofirmans)).